A 556-amino-acid chain; its full sequence is MHLCNNQLLDHLDCNAVYRGYVSQENKVKRRKRLFNAIRKLWNERRRYRMPKDESISPTPISYSFRSLRRGHTSGHASEHTSSSRSSHDESDSMSSSSESDSDSVSSESNPKSYSDSSTSSARSSSTSGSISLYDDYYPAYSSNAPNTAISNYVSSGLSYYGNSSIIMNAVEYNQFFPLTITTLIVKNNKNVVSNLPKNVSFYFHSDNTVLLNEYYKSLSKLKNNFRGIIYKTTPYGSCNDTESLQVDTKGSVWFRDVSNMGSSGLIAFAPFDYCAPMHVLQAVQDRAKAILFYNASTASNSLTNFDHFEDAVDMITFETLPMALISYENGIAFEKILNEYSASSLNSVQDGGALVEYFGNIDATARLGVIISKEPKLLGLYIFIGVLLGLIGVIGLFICLHFSGAMNGFYRLLNRHGIPVQERIVNIGPNKPENRVTKEMLDTLPVRMFSGPHLANPNDELVYEKDWKLDKSESFDGQGNVVTTAERGSKYFDQRECTICLCEYSEESPLYRELPCHHIFHPACIDPYLLKNSDLCPLCKQSVTNMLENASEDNV.

Residues 69-129 (RRGHTSGHAS…SSARSSSTSG (61 aa)) form a disordered region. Composition is skewed to low complexity over residues 74–85 (SGHASEHTSSSR) and 93–129 (SMSSSSESDSDSVSSESNPKSYSDSSTSSARSSSTSG). The chain crosses the membrane as a helical span at residues 379–399 (LGLYIFIGVLLGLIGVIGLFI). An RING-type; atypical zinc finger spans residues 498–541 (CTICLCEYSEESPLYRELPCHHIFHPACIDPYLLKNSDLCPLCK).

The protein resides in the vacuole membrane. The protein localises to the cell membrane. This is an uncharacterized protein from Schizosaccharomyces pombe (strain 972 / ATCC 24843) (Fission yeast).